The primary structure comprises 319 residues: L-lactate dehydrogenase 2 (319 aa).

NAD(+)-binding positions include valine 16, aspartate 37, lysine 42, tyrosine 68, and 82 to 83; that span reads GA. Substrate is bound by residues glutamine 85 and arginine 91. Residues serine 104, 121 to 123, and serine 146 contribute to the NAD(+) site; that span reads AAN. 123-126 contributes to the substrate binding site; the sequence is NPVD. 151-154 is a substrate binding site; that stretch reads DSAR. Histidine 178 acts as the Proton acceptor in catalysis. Residue tyrosine 222 is modified to Phosphotyrosine. Position 231 (threonine 231) interacts with substrate.

It belongs to the LDH/MDH superfamily. LDH family. In terms of assembly, homotetramer.

It is found in the cytoplasm. The catalysed reaction is (S)-lactate + NAD(+) = pyruvate + NADH + H(+). It participates in fermentation; pyruvate fermentation to lactate; (S)-lactate from pyruvate: step 1/1. Functionally, catalyzes the conversion of lactate to pyruvate (Potential). Contributes to S.aureus growth during nitrosative stress in both aerobically and anaerobically cultured cells, despite playing a secondary role in this resistance mechanism. The sequence is that of L-lactate dehydrogenase 2 from Staphylococcus aureus (strain USA300).